A 294-amino-acid chain; its full sequence is Glutamyl-Q tRNA(Asp) synthetase (294 aa).

Residues 7-11 (RFAPS) and E43 each bind L-glutamate. The 'HIGH' region motif lies at 10–20 (PSPSGPLHFGS). Residues C99, C101, Y113, and C117 each coordinate Zn(2+). Positions 168 and 186 each coordinate L-glutamate. Positions 224–228 (KLSKQ) match the 'KMSKS' region motif. K227 contacts ATP.

This sequence belongs to the class-I aminoacyl-tRNA synthetase family. GluQ subfamily. Requires Zn(2+) as cofactor.

Functionally, catalyzes the tRNA-independent activation of glutamate in presence of ATP and the subsequent transfer of glutamate onto a tRNA(Asp). Glutamate is transferred on the 2-amino-5-(4,5-dihydroxy-2-cyclopenten-1-yl) moiety of the queuosine in the wobble position of the QUC anticodon. This chain is Glutamyl-Q tRNA(Asp) synthetase, found in Vibrio parahaemolyticus serotype O3:K6 (strain RIMD 2210633).